We begin with the raw amino-acid sequence, 93 residues long: UPF0223 protein LACR_0546 (93 aa).

The protein belongs to the UPF0223 family.

In Lactococcus lactis subsp. cremoris (strain SK11), this protein is UPF0223 protein LACR_0546.